Consider the following 262-residue polypeptide: 4-hydroxy-tetrahydrodipicolinate reductase (262 aa).

9–14 (GCLGRM) provides a ligand contact to NAD(+). Arg-36 contributes to the NADP(+) binding site. Residues 100–102 (GTT) and 121–124 (SANM) contribute to the NAD(+) site. Residue His-154 is the Proton donor/acceptor of the active site. (S)-2,3,4,5-tetrahydrodipicolinate is bound at residue His-155. The Proton donor role is filled by Lys-158. 164 to 165 (GT) is a binding site for (S)-2,3,4,5-tetrahydrodipicolinate.

It belongs to the DapB family.

It localises to the cytoplasm. The enzyme catalyses (S)-2,3,4,5-tetrahydrodipicolinate + NAD(+) + H2O = (2S,4S)-4-hydroxy-2,3,4,5-tetrahydrodipicolinate + NADH + H(+). It carries out the reaction (S)-2,3,4,5-tetrahydrodipicolinate + NADP(+) + H2O = (2S,4S)-4-hydroxy-2,3,4,5-tetrahydrodipicolinate + NADPH + H(+). It participates in amino-acid biosynthesis; L-lysine biosynthesis via DAP pathway; (S)-tetrahydrodipicolinate from L-aspartate: step 4/4. Catalyzes the conversion of 4-hydroxy-tetrahydrodipicolinate (HTPA) to tetrahydrodipicolinate. The sequence is that of 4-hydroxy-tetrahydrodipicolinate reductase from Wolbachia pipientis subsp. Culex pipiens (strain wPip).